A 91-amino-acid polypeptide reads, in one-letter code: Large ribosomal subunit protein bL27 (91 aa).

A compositionally biased stretch (polar residues) spans 1–13 (MATKKSGGSSCNG). The tract at residues 1-20 (MATKKSGGSSCNGRDSRGRR) is disordered.

It belongs to the bacterial ribosomal protein bL27 family.

In Anaplasma phagocytophilum (strain HZ), this protein is Large ribosomal subunit protein bL27.